Here is a 217-residue protein sequence, read N- to C-terminus: Small ribosomal subunit protein uS3 (217 aa).

The region spanning 40–110 (IRDLINKWFN…EVYINIHEVR (71 aa)) is the KH type-2 domain.

Belongs to the universal ribosomal protein uS3 family. As to quaternary structure, part of the 30S ribosomal subunit. Forms a tight complex with proteins S10 and S14.

Functionally, binds the lower part of the 30S subunit head. Binds mRNA in the 70S ribosome, positioning it for translation. The sequence is that of Small ribosomal subunit protein uS3 from Rickettsia prowazekii (strain Madrid E).